The chain runs to 173 residues: Large ribosomal subunit protein uL16 (173 aa).

It belongs to the universal ribosomal protein uL16 family.

The sequence is that of Large ribosomal subunit protein uL16 from Methanosarcina acetivorans (strain ATCC 35395 / DSM 2834 / JCM 12185 / C2A).